We begin with the raw amino-acid sequence, 62 residues long: Probable tautomerase RSc0807 (62 aa).

Residue proline 2 is the Proton acceptor; via imino nitrogen of the active site.

The protein belongs to the 4-oxalocrotonate tautomerase family.

In Ralstonia nicotianae (strain ATCC BAA-1114 / GMI1000) (Ralstonia solanacearum), this protein is Probable tautomerase RSc0807.